The following is a 151-amino-acid chain: Probable cGMP 3',5'-cyclic phosphodiesterase subunit delta (151 aa).

It belongs to the PDE6D/unc-119 family. In terms of assembly, interacts with Pde6.

Its subcellular location is the nucleus. It is found in the cytoplasm. The polypeptide is Probable cGMP 3',5'-cyclic phosphodiesterase subunit delta (Culex quinquefasciatus (Southern house mosquito)).